Here is a 375-residue protein sequence, read N- to C-terminus: Anhydro-N-acetylmuramic acid kinase 1 (375 aa).

20 to 27 (GTSFDGVD) serves as a coordination point for ATP. Positions 351-375 (APSTTGVAAPVGGGRRSKPGARELS) are disordered.

It belongs to the anhydro-N-acetylmuramic acid kinase family.

The catalysed reaction is 1,6-anhydro-N-acetyl-beta-muramate + ATP + H2O = N-acetyl-D-muramate 6-phosphate + ADP + H(+). It functions in the pathway amino-sugar metabolism; 1,6-anhydro-N-acetylmuramate degradation. It participates in cell wall biogenesis; peptidoglycan recycling. Its function is as follows. Catalyzes the specific phosphorylation of 1,6-anhydro-N-acetylmuramic acid (anhMurNAc) with the simultaneous cleavage of the 1,6-anhydro ring, generating MurNAc-6-P. Is required for the utilization of anhMurNAc either imported from the medium or derived from its own cell wall murein, and thus plays a role in cell wall recycling. This chain is Anhydro-N-acetylmuramic acid kinase 1, found in Jannaschia sp. (strain CCS1).